The primary structure comprises 356 residues: Chorismate synthase (356 aa).

Residues Arg-44 and Arg-49 each coordinate NADP(+). FMN contacts are provided by residues 121–123, Gly-278, 293–297, and Arg-320; these read HFS and KPTPS.

The protein belongs to the chorismate synthase family. It depends on FMNH2 as a cofactor.

It carries out the reaction 5-O-(1-carboxyvinyl)-3-phosphoshikimate = chorismate + phosphate. The protein operates within metabolic intermediate biosynthesis; chorismate biosynthesis; chorismate from D-erythrose 4-phosphate and phosphoenolpyruvate: step 7/7. Catalyzes the anti-1,4-elimination of the C-3 phosphate and the C-6 proR hydrogen from 5-enolpyruvylshikimate-3-phosphate (EPSP) to yield chorismate, which is the branch point compound that serves as the starting substrate for the three terminal pathways of aromatic amino acid biosynthesis. This reaction introduces a second double bond into the aromatic ring system. This Thermococcus gammatolerans (strain DSM 15229 / JCM 11827 / EJ3) protein is Chorismate synthase.